The following is a 159-amino-acid chain: NADH-quinone oxidoreductase subunit B (159 aa).

4 residues coordinate [4Fe-4S] cluster: cysteine 32, cysteine 33, cysteine 97, and cysteine 126.

It belongs to the complex I 20 kDa subunit family. NDH-1 is composed of 14 different subunits. Subunits NuoB, C, D, E, F, and G constitute the peripheral sector of the complex. Requires [4Fe-4S] cluster as cofactor.

It localises to the cell inner membrane. The enzyme catalyses a quinone + NADH + 5 H(+)(in) = a quinol + NAD(+) + 4 H(+)(out). NDH-1 shuttles electrons from NADH, via FMN and iron-sulfur (Fe-S) centers, to quinones in the respiratory chain. The immediate electron acceptor for the enzyme in this species is believed to be ubiquinone. Couples the redox reaction to proton translocation (for every two electrons transferred, four hydrogen ions are translocated across the cytoplasmic membrane), and thus conserves the redox energy in a proton gradient. The sequence is that of NADH-quinone oxidoreductase subunit B from Helicobacter pylori (strain P12).